Here is a 210-residue protein sequence, read N- to C-terminus: BAG family molecular chaperone regulator 1 (210 aa).

The region spanning 8–85 (SSVQTTIDIL…IIVMGGKNAL (78 aa)) is the Ubiquitin-like domain. The BAG domain occupies 108–194 (AYDLNLRDVA…TLLNQNDALL (87 aa)).

In terms of assembly, homodimer or homotetramer.

In terms of biological role, may inhibit the chaperone activity of HSP70/HSC70 by promoting substrate release in an ATP-dependent manner. The polypeptide is BAG family molecular chaperone regulator 1 (bag-1) (Caenorhabditis elegans).